Reading from the N-terminus, the 393-residue chain is uncharacterized protein (393 aa).

The segment at 164 to 183 (ASDPHPGKNSPASPTGENKE) is disordered. Over residues 173–183 (SPASPTGENKE) the composition is skewed to polar residues.

This is an uncharacterized protein from Treponema pallidum (strain Nichols).